We begin with the raw amino-acid sequence, 183 residues long: dTDP-4-dehydrorhamnose 3,5-epimerase (183 aa).

Substrate-binding positions include Arg24, Glu29, 48-50, and Arg60; that span reads QDN. The Proton acceptor role is filled by His63. The substrate site is built by Lys73 and His120. Tyr133 serves as the catalytic Proton donor. 2 residues coordinate substrate: Glu144 and Lys169.

This sequence belongs to the dTDP-4-dehydrorhamnose 3,5-epimerase family. In terms of assembly, homodimer.

The enzyme catalyses dTDP-4-dehydro-6-deoxy-alpha-D-glucose = dTDP-4-dehydro-beta-L-rhamnose. Its pathway is carbohydrate biosynthesis; dTDP-L-rhamnose biosynthesis. It functions in the pathway bacterial outer membrane biogenesis; LPS O-antigen biosynthesis. Catalyzes the epimerization of the C3' and C5'positions of dTDP-6-deoxy-D-xylo-4-hexulose, forming dTDP-6-deoxy-L-lyxo-4-hexulose. This is dTDP-4-dehydrorhamnose 3,5-epimerase from Salmonella typhimurium (strain LT2 / SGSC1412 / ATCC 700720).